A 327-amino-acid polypeptide reads, in one-letter code: MIDQIIDEVTDSDPYQELLVTADGVAEGTLGVRLDKWLAEQLPELSRSRCQKLIESGQVQRNGLVCQDKNLILKTGDRLVVNIPELIPLDVVAQNIPLDILYEDEQLIIINKPAGLVVHPGPGHPDGTVVNALLAHCPDLAGIGGVQRPGIVHRLDKDTTGAMVVAKTELALHNLQVQLKEKTARRLYWGIVYGSPKEIQGTVNLPVGRHPGDRQKMGIVPVEKGGREAVTHWRLLERIGNHSWLEFQLETGRTHQIRVHSKQMGHPLVGDNLYTSPGSVNVNLPGQALHAHQLSLIHPVSGEIITAIAPMPAHFEKLLVYLRQRIP.

Residues 32–105 (VRLDKWLAEQ…IPLDILYEDE (74 aa)) form the S4 RNA-binding domain. Aspartate 156 is an active-site residue.

This sequence belongs to the pseudouridine synthase RluA family.

The enzyme catalyses a uridine in RNA = a pseudouridine in RNA. This is an uncharacterized protein from Synechocystis sp. (strain ATCC 27184 / PCC 6803 / Kazusa).